The chain runs to 406 residues: Phosphatidylinositol 5-phosphate 4-kinase type-2 alpha (406 aa).

N-acetylalanine is present on Ala-2. The residue at position 3 (Thr-3) is a Phosphothreonine. Position 14 is a phosphoserine (Ser-14). One can recognise a PIPK domain in the interval 33–405 (ASDPLLSVLM…RFLDFIGHIL (373 aa)). Residues 59 to 65 (VMLMPDD) are required for interaction with PIP5K1A. N6-acetyllysine occurs at positions 89 and 145. The tract at residues 287–328 (EQEEVECEENEGEEEGESDGAHPIGTPPDSPGNTLNSSPPLA) is disordered. Residues 289–304 (EEVECEENEGEEEGES) are compositionally biased toward acidic residues.

As to quaternary structure, homodimer. Interacts with PIP4K2B; the interaction may regulate localization to the nucleus. Probably interacts with PIP5K1A; the interaction inhibits PIP5K1A kinase activity. Post-translationally, phosphorylated in tyrosines. Phosphorylation is induced by light and increases kinase activity.

It localises to the cell membrane. Its subcellular location is the nucleus. The protein localises to the lysosome. The protein resides in the cytoplasm. It is found in the photoreceptor inner segment. It localises to the cell projection. Its subcellular location is the cilium. The protein localises to the photoreceptor outer segment. It catalyses the reaction a 1,2-diacyl-sn-glycero-3-phospho-(1D-myo-inositol-5-phosphate) + ATP = a 1,2-diacyl-sn-glycero-3-phospho-(1D-myo-inositol-4,5-bisphosphate) + ADP + H(+). It carries out the reaction 1,2-dihexadecanoyl-sn-glycero-3-phospho-(1D-myo-inositol-5-phosphate) + ATP = 1,2-dihexadecanoyl-sn-glycero-3-phospho-(1D-myo-inositol-4,5-bisphosphate) + ADP + H(+). The enzyme catalyses 1,2-dihexadecanoyl-sn-glycero-3-phospho-(1D-myo-inositol-5-phosphate) + GTP = 1,2-dihexadecanoyl-sn-glycero-3-phospho-(1D-myo-inositol-4,5-bisphosphate) + GDP + H(+). Its activity is regulated as follows. In rod outer segments, activated by light. Its function is as follows. Catalyzes the phosphorylation of phosphatidylinositol 5-phosphate (PtdIns5P) on the fourth hydroxyl of the myo-inositol ring, to form phosphatidylinositol 4,5-bisphosphate (PtdIns(4,5)P2). Has both ATP- and GTP-dependent kinase activities. May exert its function by regulating the levels of PtdIns5P, which functions in the cytosol by increasing AKT activity and in the nucleus signals through ING2. May regulate the pool of cytosolic PtdIns5P in response to the activation of tyrosine phosphorylation. Required for lysosome-peroxisome membrane contacts and intracellular cholesterol transport through modulating peroxisomal PtdIns(4,5)P2 level. In collaboration with PIP4K2B, has a role in mediating autophagy in times of nutrient stress. Required for autophagosome-lysosome fusion and the regulation of cellular lipid metabolism. Negatively regulates insulin signaling through a catalytic-independent mechanism. PIP4Ks interact with PIP5Ks and suppress PIP5K-mediated PtdIns(4,5)P2 synthesis and insulin-dependent conversion to PtdIns(3,4,5)P3. May be involved in thrombopoiesis, and the terminal maturation of megakaryocytes and regulation of their size. This Rattus norvegicus (Rat) protein is Phosphatidylinositol 5-phosphate 4-kinase type-2 alpha.